We begin with the raw amino-acid sequence, 189 residues long: Shikimate kinase (189 aa).

11–16 (GTGKSA) serves as a coordination point for ATP. Ser-15 is a binding site for Mg(2+). Asp-33, Arg-57, and Gly-79 together coordinate substrate. Arg-117 provides a ligand contact to ATP. Arg-135 contacts substrate.

This sequence belongs to the shikimate kinase family. Monomer. Requires Mg(2+) as cofactor.

It localises to the cytoplasm. It carries out the reaction shikimate + ATP = 3-phosphoshikimate + ADP + H(+). The protein operates within metabolic intermediate biosynthesis; chorismate biosynthesis; chorismate from D-erythrose 4-phosphate and phosphoenolpyruvate: step 5/7. In terms of biological role, catalyzes the specific phosphorylation of the 3-hydroxyl group of shikimic acid using ATP as a cosubstrate. The protein is Shikimate kinase of Desulforudis audaxviator (strain MP104C).